Here is a 398-residue protein sequence, read N- to C-terminus: Succinate--CoA ligase [ADP-forming] subunit beta (398 aa).

One can recognise an ATP-grasp domain in the interval 9-254 (KRLLHEYGAP…ISEEDPKEIE (246 aa)). Residues Lys46, 53 to 55 (GRG), Glu109, Ala112, and Glu117 each bind ATP. Mg(2+) is bound by residues Asn209 and Asp223. Substrate is bound by residues Asn274 and 331 to 333 (GIM).

It belongs to the succinate/malate CoA ligase beta subunit family. Heterotetramer of two alpha and two beta subunits. The cofactor is Mg(2+).

It carries out the reaction succinate + ATP + CoA = succinyl-CoA + ADP + phosphate. It catalyses the reaction GTP + succinate + CoA = succinyl-CoA + GDP + phosphate. It participates in carbohydrate metabolism; tricarboxylic acid cycle; succinate from succinyl-CoA (ligase route): step 1/1. Succinyl-CoA synthetase functions in the citric acid cycle (TCA), coupling the hydrolysis of succinyl-CoA to the synthesis of either ATP or GTP and thus represents the only step of substrate-level phosphorylation in the TCA. The beta subunit provides nucleotide specificity of the enzyme and binds the substrate succinate, while the binding sites for coenzyme A and phosphate are found in the alpha subunit. This Bartonella bacilliformis (strain ATCC 35685 / KC583 / Herrer 020/F12,63) protein is Succinate--CoA ligase [ADP-forming] subunit beta.